The chain runs to 130 residues: MVQDRFYATGKRKNAIARVWLTPGTGKVIVNKMATTEYFGKIFKEHLIEKPFKTTDTFEKYDVIATLKGGGKSAQVDALAHGISRALLETDPENRTPLKQAGLLRRDQRVKERKKYGQKGARAKFQFSKR.

The tract at residues Arg-109–Arg-130 is disordered.

Belongs to the universal ribosomal protein uS9 family.

This Desulfotalea psychrophila (strain LSv54 / DSM 12343) protein is Small ribosomal subunit protein uS9.